Reading from the N-terminus, the 254-residue chain is Glutamate racemase (254 aa).

Substrate is bound by residues 10–11 and 42–43; these read DS and YG. Cysteine 73 functions as the Proton donor/acceptor in the catalytic mechanism. Substrate is bound at residue 74–75; sequence NT. The active-site Proton donor/acceptor is cysteine 183. Residue 184 to 185 coordinates substrate; sequence TH.

Belongs to the aspartate/glutamate racemases family.

The enzyme catalyses L-glutamate = D-glutamate. Its pathway is cell wall biogenesis; peptidoglycan biosynthesis. Provides the (R)-glutamate required for cell wall biosynthesis. This is Glutamate racemase from Herpetosiphon aurantiacus (strain ATCC 23779 / DSM 785 / 114-95).